The sequence spans 426 residues: Cdc25-like protein phosphatase twine (426 aa).

The interval 1-27 (MASKRLMLDVEEEDDESGACGQENFDP) is disordered. The Rhodanese domain maps to 265-371 (SQGGYEIIDC…FFGLYSQLCQ (107 aa)). The active site involves Cys-318.

This sequence belongs to the MPI phosphatase family. Expressed in developing male and female germ cells.

The catalysed reaction is O-phospho-L-tyrosyl-[protein] + H2O = L-tyrosyl-[protein] + phosphate. In terms of biological role, required during meiosis. Regulates the transition from the extended G2 phase to the onset of the first meiotic division. This Drosophila melanogaster (Fruit fly) protein is Cdc25-like protein phosphatase twine (twe).